We begin with the raw amino-acid sequence, 359 residues long: Peptide chain release factor 1 (359 aa).

Glutamine 235 carries the N5-methylglutamine modification.

This sequence belongs to the prokaryotic/mitochondrial release factor family. Post-translationally, methylated by PrmC. Methylation increases the termination efficiency of RF1.

The protein resides in the cytoplasm. In terms of biological role, peptide chain release factor 1 directs the termination of translation in response to the peptide chain termination codons UAG and UAA. The polypeptide is Peptide chain release factor 1 (Polynucleobacter asymbioticus (strain DSM 18221 / CIP 109841 / QLW-P1DMWA-1) (Polynucleobacter necessarius subsp. asymbioticus)).